A 383-amino-acid chain; its full sequence is MARREKNPIRATVAMNIGLSDSLLAFVNNYVKALRFSLFWMKENVKNPNEKGALSKVHEGLYEKLRKEYNLPSKVTEDCYRDALAIYKSWYNNPKKGRFPRVYKPTVWLTPKQSYTVDLEKMTVRIASVGELPILGYPRNLKEYANWKMKEARLTIKDGKALLKVTFEKEEEKVKPKDSVAVDINMNDIVVGKDDTHYVRIPTRLHDAHHFKSLAENLQKKYPRRWKQNRRILHRARSFHQKAKLIMEDYARKVGKWVVEIAEGLGANVIKLEDLKNLIKDVNKLPAEFRDKLYLMQYRRIQYWIEWQAKKHGMIVEFVNPSYSSVSCPKCGHKMVEIAYRYFHCPSCGYENDRDVIAIMNLNGRGSLTLSTAPQMRDVAPNR.

The Zn(2+) site is built by Cys328, Cys331, Cys345, and Cys348.

In the N-terminal section; belongs to the transposase 2 family. The protein in the C-terminal section; belongs to the transposase 35 family.

This Acidianus convivator (ATV) protein is TnpB-like protein ORF383B.